We begin with the raw amino-acid sequence, 331 residues long: Ketol-acid reductoisomerase (NADP(+)) (331 aa).

The region spanning 2–182 (AKLFYDSDAD…GGTRAGILET (181 aa)) is the KARI N-terminal Rossmann domain. Residues 25–28 (YGSQ), Ser-51, Ser-53, and 83–86 (DEFQ) each bind NADP(+). The active site involves His-108. Gly-134 provides a ligand contact to NADP(+). The KARI C-terminal knotted domain occupies 183-328 (NFKEETETDL…KTLRSMFSWL (146 aa)). 4 residues coordinate Mg(2+): Asp-191, Glu-195, Glu-227, and Glu-231. Ser-252 serves as a coordination point for substrate.

This sequence belongs to the ketol-acid reductoisomerase family. It depends on Mg(2+) as a cofactor.

It catalyses the reaction (2R)-2,3-dihydroxy-3-methylbutanoate + NADP(+) = (2S)-2-acetolactate + NADPH + H(+). The catalysed reaction is (2R,3R)-2,3-dihydroxy-3-methylpentanoate + NADP(+) = (S)-2-ethyl-2-hydroxy-3-oxobutanoate + NADPH + H(+). Its pathway is amino-acid biosynthesis; L-isoleucine biosynthesis; L-isoleucine from 2-oxobutanoate: step 2/4. The protein operates within amino-acid biosynthesis; L-valine biosynthesis; L-valine from pyruvate: step 2/4. In terms of biological role, involved in the biosynthesis of branched-chain amino acids (BCAA). Catalyzes an alkyl-migration followed by a ketol-acid reduction of (S)-2-acetolactate (S2AL) to yield (R)-2,3-dihydroxy-isovalerate. In the isomerase reaction, S2AL is rearranged via a Mg-dependent methyl migration to produce 3-hydroxy-3-methyl-2-ketobutyrate (HMKB). In the reductase reaction, this 2-ketoacid undergoes a metal-dependent reduction by NADPH to yield (R)-2,3-dihydroxy-isovalerate. The protein is Ketol-acid reductoisomerase (NADP(+)) of Prochlorococcus marinus (strain NATL1A).